The chain runs to 247 residues: TLC domain-containing protein 1 (247 aa).

A signal peptide spans 1–27 (MPLLFHPAWPLLLGATLTFRALRRVLC). Residues 28-46 (RLPQPAHVQTDPLRTWRWH) are Extracellular-facing. One can recognise a TLC domain in the interval 40 to 234 (LRTWRWHNLL…LLRSDFCPER (195 aa)). Residues 47 to 67 (NLLVSFTHSIVSGIWALLCLW) form a helical membrane-spanning segment. Over 68 to 83 (QTPEMLVEIETAWSAS) the chain is Cytoplasmic. A helical transmembrane segment spans residues 84-104 (GYLLVCFSAGYFIHDTVDIVV). Topologically, residues 105–123 (SKQTRASWEYLVHHVMAMG) are extracellular. An intramembrane region (helical) is located at residues 124 to 144 (AFFSGIFWKRFVGGGVLTLLV). At 145–173 (EVSNIFLTLRMMMKINNAQDLLLYKVNKY) the chain is on the extracellular side. A helical transmembrane segment spans residues 174–194 (INLVMYFLFRLAPQAYLTKFF). Residues 195 to 201 (LQYAGQR) are Cytoplasmic-facing. Residues 202-222 (TLGTFLLAILLMLDLMIIIYF) form a helical membrane-spanning segment. The Extracellular segment spans residues 223-247 (SRLLRSDFCPERAPRRQQKDKFLTE).

It is found in the cell membrane. In terms of biological role, regulates the composition and fluidity of the plasma membrane. Inhibits the incorporation of membrane-fluidizing phospholipids containing omega-3 long-chain polyunsaturated fatty acids (LCPUFA) and thereby promotes membrane rigidity. Does not appear to have any effect on LCPUFA synthesis. This is TLC domain-containing protein 1 (Tlcd1) from Mus musculus (Mouse).